Consider the following 98-residue polypeptide: Integration host factor subunit alpha (98 aa).

Residues 49 to 70 form a disordered region; it reads FGNFDLRDKNQRPGRNPKTGED.

Belongs to the bacterial histone-like protein family. In terms of assembly, heterodimer of an alpha and a beta chain.

In terms of biological role, this protein is one of the two subunits of integration host factor, a specific DNA-binding protein that functions in genetic recombination as well as in transcriptional and translational control. The protein is Integration host factor subunit alpha of Sodalis glossinidius (strain morsitans).